The sequence spans 197 residues: Protein GrpE (197 aa).

The disordered stretch occupies residues 1 to 39 (MSSKEQKTPEGQAPEEIIMDQHEEIEAVEPEASAEQVDP).

Belongs to the GrpE family. As to quaternary structure, homodimer.

Its subcellular location is the cytoplasm. In terms of biological role, participates actively in the response to hyperosmotic and heat shock by preventing the aggregation of stress-denatured proteins, in association with DnaK and GrpE. It is the nucleotide exchange factor for DnaK and may function as a thermosensor. Unfolded proteins bind initially to DnaJ; upon interaction with the DnaJ-bound protein, DnaK hydrolyzes its bound ATP, resulting in the formation of a stable complex. GrpE releases ADP from DnaK; ATP binding to DnaK triggers the release of the substrate protein, thus completing the reaction cycle. Several rounds of ATP-dependent interactions between DnaJ, DnaK and GrpE are required for fully efficient folding. In Escherichia coli O157:H7 (strain EC4115 / EHEC), this protein is Protein GrpE.